A 218-amino-acid polypeptide reads, in one-letter code: Phosphoribosylformylglycinamidine synthase subunit PurQ (218 aa).

In terms of domain architecture, Glutamine amidotransferase type-1 spans 2–218 (RVGVIRFPGS…FFRGILKFRG (217 aa)). Residue cysteine 85 is the Nucleophile of the active site. Residues histidine 192 and glutamate 194 contribute to the active site.

In terms of assembly, part of the FGAM synthase complex composed of 1 PurL, 1 PurQ and 2 PurS subunits.

It localises to the cytoplasm. It carries out the reaction N(2)-formyl-N(1)-(5-phospho-beta-D-ribosyl)glycinamide + L-glutamine + ATP + H2O = 2-formamido-N(1)-(5-O-phospho-beta-D-ribosyl)acetamidine + L-glutamate + ADP + phosphate + H(+). The catalysed reaction is L-glutamine + H2O = L-glutamate + NH4(+). It participates in purine metabolism; IMP biosynthesis via de novo pathway; 5-amino-1-(5-phospho-D-ribosyl)imidazole from N(2)-formyl-N(1)-(5-phospho-D-ribosyl)glycinamide: step 1/2. Its function is as follows. Part of the phosphoribosylformylglycinamidine synthase complex involved in the purines biosynthetic pathway. Catalyzes the ATP-dependent conversion of formylglycinamide ribonucleotide (FGAR) and glutamine to yield formylglycinamidine ribonucleotide (FGAM) and glutamate. The FGAM synthase complex is composed of three subunits. PurQ produces an ammonia molecule by converting glutamine to glutamate. PurL transfers the ammonia molecule to FGAR to form FGAM in an ATP-dependent manner. PurS interacts with PurQ and PurL and is thought to assist in the transfer of the ammonia molecule from PurQ to PurL. In Methanothermobacter thermautotrophicus (strain ATCC 29096 / DSM 1053 / JCM 10044 / NBRC 100330 / Delta H) (Methanobacterium thermoautotrophicum), this protein is Phosphoribosylformylglycinamidine synthase subunit PurQ.